The following is a 192-amino-acid chain: Flavin prenyltransferase UbiX (192 aa).

FMN is bound by residues 10-12, Ser36, 92-95, and Arg127; these read GAS and SMTT. Residues Tyr157 and Lys173 each coordinate dimethylallyl phosphate.

This sequence belongs to the UbiX/PAD1 family.

The enzyme catalyses dimethylallyl phosphate + FMNH2 = prenylated FMNH2 + phosphate. In terms of biological role, flavin prenyltransferase that catalyzes the synthesis of the prenylated FMN cofactor (prenyl-FMN) for 4-hydroxy-3-polyprenylbenzoic acid decarboxylase UbiD. The prenyltransferase is metal-independent and links a dimethylallyl moiety from dimethylallyl monophosphate (DMAP) to the flavin N5 and C6 atoms of FMN. This is Flavin prenyltransferase UbiX from Chlamydia pneumoniae (Chlamydophila pneumoniae).